We begin with the raw amino-acid sequence, 1047 residues long: MIEWIIRRSVANRFLVLMGALFLSIWGTWTIINTPVDALPDLSDVQVIIKTSYPGQAPQIVENQVTYPLTTTMLSVPGAKTVRGFSQFGDSYVYVIFEDGTDPYWARSRVLEYLNQVQGKLPAGVSAELGPDATGVGWIYEYALVDRSGKHDLADLRSLQDWFLKYELKTIPDVAEVASVGGVVKEYQVVIDPQRLAQYGISLAEVKSALDASNQEAGGSSIELAEAEYMVRASGYLQTLDDFNHIVLKASENGVPVYLRDVAKVQIGPEMRRGIAELNGEGEVAGGVVILRSGKNAREVIAAVKDKLETLKSSLPEGVEIVTTYDRSQLIDRAIDNLSGKLLEEFIVVAVVCALFLWHVRSALVAIISLPLGLCIAFIVMHFQGLNANIMSLGGIAIAVGAMVDAAIVMIENAHKRLEEWQHQHPDATLDNKTRWQVITDASVEVGPALFISLLIITLSFIPIFTLEGQEGRLFGPLAFTKTYAMAGAALLAIVVIPILMGYWIRGKIPPESSNPLNRFLIRVYHPLLLKVLHWPKTTLLVAALSVLTVLWPLNKVGGEFLPQINEGDLLYMPSTLPGISAAEAASMLQKTDKLIMSVPEVARVFGKTGKAETATDSAPLEMVETTIQLKPQEQWRPGMTMDKIIEELDNTVRLPGLANLWVPPIRNRIDMLSTGIKSPIGIKVSGTVLADIDAMAEQIEEVARTVPGVASALAERLEGGRYINVEINREKAARYGMTVADVQLFVTSAVGGAMVGETVEGIARYPINLRYPQSWRDSPQALRQLPILTPMKQQITLADVADIKVSTGPSMLKTENARPTSWIYIDARDRDMVSVVHDLQKAIAEKVQLKPGTSVAFSGQFELLERANHKLKLMVPMTLMIIFVLLYLAFRRVGEALLIISSVPFALVGGIWLLWWMGFHLSVATGTGFIALAGVAAEFGVVMLMYLRHAIEAVPSLNNPQTFSEQKLDEALYHGAVLRVRPKAMTVAVIIAGLLPILWGTGAGSEVMSRIAAPMIGGMITAPLLSLFIIPAAYKLMWLHRHRVRK.

Transmembrane regions (helical) follow at residues 14 to 34 (FLVL…IINT), 338 to 358 (LSGK…LFLW), 363 to 383 (ALVA…VMHF), 391 to 411 (MSLG…IVMI), 446 to 466 (VGPA…PIFT), 485 to 505 (AMAG…GYWI), 532 to 552 (VLHW…TVLW), 871 to 891 (KLKL…YLAF), 898 to 918 (LLII…LWWM), 928 to 948 (TGFI…LMYL), 985 to 1005 (AMTV…TGAG), and 1012 to 1032 (IAAP…FIIP).

Belongs to the resistance-nodulation-cell division (RND) (TC 2.A.6) family. As to quaternary structure, the cus efflux system is composed of CusA, CusB, CusC and CusF.

Its subcellular location is the cell inner membrane. In terms of biological role, part of a cation efflux system that mediates resistance to copper and silver. This is Cation efflux system protein CusA (cusA) from Escherichia coli (strain K12).